An 87-amino-acid polypeptide reads, in one-letter code: MRKGSVKEVLAKLKYDPREDERDYYIIIEHRGAYGDVKKIPVELIELGHGYFFVGDAQIPYHRIRRVVKKDGKVIWETRKDRRGESD.

Belongs to the UPF0248 family.

This is UPF0248 protein TON_0940 from Thermococcus onnurineus (strain NA1).